Here is a 277-residue protein sequence, read N- to C-terminus: GATA transcription factor 15 (277 aa).

Positions 52 to 94 are disordered; it reads AYDDHSTVTTSPSSPSSSSTGSVDCTLSLGTPSSRRAEPVAAA. The segment covering 58–74 has biased composition (low complexity); sequence TVTTSPSSPSSSSTGSV. The GATA-type zinc-finger motif lies at 154 to 179; sequence CANCGTASTPLWRNGPRGPKSLCNAC.

The protein belongs to the type IV zinc-finger family. Class B subfamily.

Functionally, probable transcription factor that regulates organogenesis during transition from the vegetative to the reproductive phase. Regulates the expression of CYP78A11/PLA1, HD3A and MADS1 during reproductive development in rice. May act upstream of CYP78A11/PLA1 during panicle development. Acts independently of the photoperiodic and gibberellin signaling pathways. The protein is GATA transcription factor 15 of Oryza sativa subsp. indica (Rice).